The following is a 180-amino-acid chain: Large ribosomal subunit protein uL6 (180 aa).

The protein belongs to the universal ribosomal protein uL6 family. Part of the 50S ribosomal subunit.

Its function is as follows. This protein binds to the 23S rRNA, and is important in its secondary structure. It is located near the subunit interface in the base of the L7/L12 stalk, and near the tRNA binding site of the peptidyltransferase center. In Borrelia recurrentis (strain A1), this protein is Large ribosomal subunit protein uL6.